The sequence spans 644 residues: MSLIECKNINRYFGSGENRVHILKDISLSIEKGDFVAIIGQSGSGKSTLMNILGCLDTAGSGSYRIDGIETAKMQPDELAALRRERFGFIFQRYNLLSSLTARDNVALPAVYMGAGGKERSARADKLLQDLGLASKEGNKPSELSGGQQQRVSIARALMNGGEIIFADEPTGALDTASGKNVMEIIHKLHEAGHTVIMVTHDPGIAANANRVIEIRDGEIISDTSKNPEIPASNVGRIQEKASWSFYYDQFVEAFRMSVQAVLAHKMRSLLTMLGIIIGIASVVSVVALGNGSQKKILEDISSIGTNTISIFPGRGFGDRRSGRIKTLTIDDAKIIAKQSYVASATPMTSSGGTLTYRNTDLTASLYGVGEQYFDVRGLKLETGRLFDENDVKEDAQVVVIDQNVKDKLFADSDPLGKTILFRKRPLTVIGVMKKDENAFGNSDVLMLWSPYTTVMHQITGESHTNSITVKIKDNANTQVAEKGLTDLLKARHGTEDFFMNNSDSIRQIVESTTGTMKLLISSIALISLVVGGIGVMNIMLVSVTERTKEIGIRMAIGARRGNILQQFLIEAVLICVIGGLVGVGLSAAVSLVFNHFVTDFPMDISAMSVIGAVACSTGIGIAFGFMPANKAAKLNPIDALAQD.

The 239-residue stretch at 4–242 folds into the ABC transporter domain; sequence IECKNINRYF…SNVGRIQEKA (239 aa). 40–47 is an ATP binding site; it reads GQSGSGKS. The next 4 membrane-spanning stretches (helical) occupy residues 270 to 290, 524 to 544, 574 to 594, and 607 to 627; these read LLTM…VALG, IALI…LVSV, LICV…SLVF, and AMSV…FGFM.

The protein belongs to the ABC transporter superfamily. Macrolide exporter (TC 3.A.1.122) family. Homodimer.

The protein resides in the cell inner membrane. Its function is as follows. Non-canonical ABC transporter that contains transmembrane domains (TMD), which form a pore in the inner membrane, and an ATP-binding domain (NBD), which is responsible for energy generation. Confers resistance against macrolides. This is Macrolide export ATP-binding/permease protein MacB from Neisseria meningitidis serogroup A / serotype 4A (strain DSM 15465 / Z2491).